The following is a 776-amino-acid chain: Photosystem I P700 chlorophyll a apoprotein A1 (776 aa).

Helical transmembrane passes span 76-99 (IFSAHFGHLAIVFIWMSGAFFHGA), 162-185 (LMALATGALIMAALVLHGGIFHYH), 201-225 (LQHHQIGLFGLGSLGWTGHLIHVAN), 309-327 (VAHHHLAWAVFLMFGGHVY), 368-391 (WHAQLAVNLACIGSGSIVVAHHMY), 407-433 (LGLFTHHMWIGGLMICGAAAHAGIAVI), 455-477 (AIISHLNWVCMFLGFHSFGLYIH), and 557-575 (LMIHHIHAFTIHVTCLILL). [4Fe-4S] cluster is bound by residues Cys-599 and Cys-608. Transmembrane regions (helical) follow at residues 615-636 (HVFLGLFWMYNSLSMVIFYFSW) and 690-712 (LSGYGLLFLGGHFVWAFSLMFLF). Divinylchlorophyll a' is bound at residue His-701. Divinyl chlorophyll a-binding residues include Met-709 and Tyr-717. Trp-718 serves as a coordination point for phylloquinone. A helical membrane pass occupies residues 750–770 (AVGVTHFLFGGIVTTWAFFHA).

This sequence belongs to the PsaA/PsaB family. The PsaA/B heterodimer binds the P700 chlorophyll special pair and subsequent electron acceptors. PSI consists of a core antenna complex that captures photons, and an electron transfer chain that converts photonic excitation into a charge separation. The cyanobacterial PSI reaction center is composed of one copy each of PsaA,B,C,D,E,F,I,J,K,L,M and X, and forms trimeric complexes. PSI electron transfer chain: 5 divinyl chlorophyll a, 1 divinyl chlorophyll a', 2 phylloquinones and 3 4Fe-4S clusters. PSI core antenna: 90 divinyl chlorophyll a, 22 carotenoids, 3 phospholipids and 1 galactolipid. P700 is a divinyl chlorophyll a/divinyl chlorophyll a' dimer, A0 is one or more chlorophyll divinyl a, A1 is one or both phylloquinones and FX is a shared 4Fe-4S iron-sulfur center. serves as cofactor.

The protein localises to the cellular thylakoid membrane. It carries out the reaction reduced [plastocyanin] + hnu + oxidized [2Fe-2S]-[ferredoxin] = oxidized [plastocyanin] + reduced [2Fe-2S]-[ferredoxin]. In terms of biological role, psaA and PsaB bind P700, the primary electron donor of photosystem I (PSI), as well as the electron acceptors A0, A1 and FX. PSI is a plastocyanin/cytochrome c6-ferredoxin oxidoreductase, converting photonic excitation into a charge separation, which transfers an electron from the donor P700 chlorophyll pair to the spectroscopically characterized acceptors A0, A1, FX, FA and FB in turn. Oxidized P700 is reduced on the lumenal side of the thylakoid membrane by plastocyanin or cytochrome c6. This chain is Photosystem I P700 chlorophyll a apoprotein A1, found in Prochlorococcus marinus (strain MIT 9313).